Consider the following 154-residue polypeptide: ATP synthase subunit b', chloroplastic (154 aa).

A helical transmembrane segment spans residues 22-42 (GTLPLIAIQFLILMFLLNILL).

It belongs to the ATPase B chain family. In terms of assembly, F-type ATPases have 2 components, F(1) - the catalytic core - and F(0) - the membrane proton channel. F(1) has five subunits: alpha(3), beta(3), gamma(1), delta(1), epsilon(1). F(0) has four main subunits: a(1), b(1), b'(1) and c(10-14). The alpha and beta chains form an alternating ring which encloses part of the gamma chain. F(1) is attached to F(0) by a central stalk formed by the gamma and epsilon chains, while a peripheral stalk is formed by the delta, b and b' chains.

It localises to the plastid. The protein resides in the chloroplast thylakoid membrane. In terms of biological role, f(1)F(0) ATP synthase produces ATP from ADP in the presence of a proton or sodium gradient. F-type ATPases consist of two structural domains, F(1) containing the extramembraneous catalytic core and F(0) containing the membrane proton channel, linked together by a central stalk and a peripheral stalk. During catalysis, ATP synthesis in the catalytic domain of F(1) is coupled via a rotary mechanism of the central stalk subunits to proton translocation. Component of the F(0) channel, it forms part of the peripheral stalk, linking F(1) to F(0). The b'-subunit is a diverged and duplicated form of b found in plants and photosynthetic bacteria. The polypeptide is ATP synthase subunit b', chloroplastic (Vaucheria litorea (Yellow-green alga)).